A 339-amino-acid chain; its full sequence is Transmembrane protein 120B (339 aa).

Residues 1 to 77 (MSGQLERCER…ASREEAELVQ (77 aa)) adopt a coiled-coil conformation. Transmembrane regions (helical) follow at residues 102–124 (GLYLNLVLGNVNVTLLSNQAKFA), 132–152 (FKLYLTIILLLGAVACRFFLH), 159–179 (VFNFLLVWYYCTLTIRESILI), 187–207 (GWWVSHHYVSTFLSGVMLTWP), 270–290 (FLLPFLFCGHFWQLYNAVTLF), and 302–322 (QVFVLALTFLVLFLGNFLTTL).

Belongs to the TMEM120 family. As to quaternary structure, heterooligomer with TMEM120A.

The protein resides in the nucleus inner membrane. In terms of biological role, necessary for efficient adipogenesis. Does not show ion channel activity. The chain is Transmembrane protein 120B (TMEM120B) from Bos taurus (Bovine).